The sequence spans 1493 residues: DNA excision repair protein ERCC-6 (1493 aa).

Positions 1-39 (MPNEGIPHSSQTQEQDCLQSQPVSNNEEMAIKQESGGDG) are disordered. An N-terminal domain; essential for its chromatin remodeling activity region spans residues 1 to 510 (MPNEGIPHSS…GFLFKKLFKY (510 aa)). Polar residues predominate over residues 8–27 (HSSQTQEQDCLQSQPVSNNE). Residue S10 is modified to Phosphoserine; by ATM. S158 carries the phosphoserine; by CDK2 modification. K170 is modified (N6-methylated lysine; by EHMT2). K205 is covalently cross-linked (Glycyl lysine isopeptide (Lys-Gly) (interchain with G-Cter in SUMO3)). Residue K255 forms a Glycyl lysine isopeptide (Lys-Gly) (interchain with G-Cter in SUMO2) linkage. 2 disordered regions span residues 287–323 (KQGCNKRAARKAPAPVTPPAPVQNKNKPNKKARVLSK) and 344–453 (GKVG…GRYR). At K297 the chain carries N6-methylated lysine; by EHMT2. Residues 353–363 (RPWESDMRPEA) are compositionally biased toward basic and acidic residues. The span at 364–392 (EGDSEGEESEYFPTEEEEEEEDDEVEGAE) shows a compositional bias: acidic residues. A phosphoserine mark is found at S429 and S430. K448 carries the N6-methylated lysine; by EHMT2 modification. 2 positions are modified to phosphoserine: S486 and S489. The Helicase ATP-binding domain maps to 519 to 695 (WELHCQQAGG…WSLFDFIFPG (177 aa)). 532–539 (DEMGLGKT) is a binding site for ATP. The DEAH box signature appears at 646–649 (DEGH). In terms of domain architecture, Helicase C-terminal spans 843–1002 (VVESLLKIWH…RRFFKSNDLY (160 aa)). Disordered stretches follow at residues 1042 to 1147 (PAFG…DESI), 1181 to 1247 (HKSK…EQSN), and 1318 to 1384 (RGIS…SGPL). N6-methylated lysine; by EHMT2 is present on K1054. Over residues 1123 to 1141 (ISGNGECSNSSGTGKTSMP) the composition is skewed to polar residues. A Phosphoserine modification is found at S1142. Residues 1200-1210 (LRPKQKPKNSK) show a composition bias toward basic residues. Composition is skewed to basic and acidic residues over residues 1211–1221 (HCRDAKFEGTR) and 1232–1247 (QKQDSENKSEAKEQSN). Positions 1327–1336 (KKSRFGKKRN) are enriched in basic residues. The span at 1337–1351 (SNFSVQHPSSTSPTE) shows a compositional bias: polar residues. S1348 bears the Phosphoserine mark. Basic and acidic residues predominate over residues 1352–1376 (KCQDGIMKKEGKDNVPEHFSGRAED). The CSA-interacting motif (CIM) signature appears at 1386 to 1398 (SSSLLAKMRARNH). A ubiquitin-binding domain (UBD) region spans residues 1400–1428 (ILPERLESESGHLQEASALLPTTEHDDLL). The tract at residues 1429-1493 (VEMRNFIAFQ…GIWKLKPEYC (65 aa)) is winged-helix domain (WHD). The tract at residues 1446–1493 (STREILQEFESKLSASQSCVFRELLRNLCTFHRTSGGEGIWKLKPEYC) is essential for its interaction with RNA polymerase II, transcription-coupled nucleotide excision repair activity, association with chromatin after UV irradiation and for mediating the UV-induced translocation of ERRC8 to the nuclear matrix.

The protein belongs to the SNF2/RAD54 helicase family. Homodimer. Binds DNA. Interacts with ERCC8. Interacts with RNA polymerase II; interaction is enhanced by UV irradiation. Component of the B-WICH complex, at least composed of SMARCA5/SNF2H, BAZ1B/WSTF, SF3B1, DEK, MYO1C, ERCC6, MYBBP1A and DDX21. Interacts with KIAA1530/UVSSA. Interacts with ELOA and CUL5; the interaction is induced by DNA damaging agents or by inhibitors of RNA polymerase II elongation. Interacts (via WHD region) with RIF1. Interacts with SMARCC2/BAF170, SMARCB1/BAF47 and the neuron-specific chromatin remodeling complex (nBAF complex). Interacts with ERCC5/XPG (via C-terminus); the interaction stimulates ERCC6/CSB binding to the DNA repair bubble and ERCC6/CSB ATPase activity. May form a complex composed of RNA polymerase II, ERCC6/CSB and ERCC5/XPG which associates with the DNA repair bubble during transcription-coupled nucleotide excision repair. Interacts with CAND1, CSTF1, DDX3X, DDX5, DDX17, DDX23, DHX36, HDAC1, HNRNPU, MTA2, PRPF3, PSMD3, RBBP4, SFPQ, SMARCA1, SMARCA2, TOP1, USP7, XRCC5, COPS3, COPS4, COPS6, DDX1, DDX41, GATAD2A, GATAD2B, PRPF4, PSMC5, SF3B2, CTR9, NONO, PSMD12 and TOP2A. In terms of processing, phosphorylated in a cell cycle-dependent manner at Ser-158 by cyclin A-CDK2 and at Ser-10 by ATM in response to DNA damage. Phosphorylation at these two sites promotes the intramolecular interaction of the N-terminal domain with the helicase ATP-binding domain, thereby probably releasing the inhibitory effect of the N-terminal domain on its ATPase activity. Phosphorylation is essential for its chromatin remodeling activity. Ubiquitinated at the C-terminus. Ubiquitination by the CSA complex leads to ERCC6 proteasomal degradation in a UV-dependent manner. Stabilized following interaction with KIAA1530/UVSSA, which promotes recruitment of deubiquitinating enzyme USP7, leading to deubiquitination of ERCC6 thereby preventing UV-induced degradation of ERCC6 by the proteasome. Post-translationally, sumoylation at Lys-205 in an UV-radiation-dependent manner is essential for its transcription-coupled nucleotide excision repair activity.

It is found in the nucleus. The protein resides in the chromosome. The catalysed reaction is ATP + H2O = ADP + phosphate + H(+). Functionally, essential factor involved in transcription-coupled nucleotide excision repair (TC-NER), a process during which RNA polymerase II-blocking lesions are rapidly removed from the transcribed strand of active genes. Plays a central role in the initiation of the TC-NER process: specifically recognizes and binds RNA polymerase II stalled at a lesion, and mediates recruitment of ERCC8/CSA, initiating DNA damage excision by TFIIH recruitment. Upon DNA-binding, it locally modifies DNA conformation by wrapping the DNA around itself, thereby modifying the interface between stalled RNA polymerase II and DNA. Acts as a chromatin remodeler at DSBs; DNA-dependent ATPase-dependent activity is essential for this function. Plays an important role in regulating the choice of the DNA double-strand breaks (DSBs) repair pathway and G2/M checkpoint activation; DNA-dependent ATPase activity is essential for this function. Regulates the DNA repair pathway choice by inhibiting non-homologous end joining (NHEJ), thereby promoting the homologous recombination (HR)-mediated repair of DSBs during the S/G2 phases of the cell cycle. Mediates the activation of the ATM- and CHEK2-dependent DNA damage responses thus preventing premature entry of cells into mitosis following the induction of DNA DSBs. Remodels chromatin by evicting histones from chromatin flanking DSBs, limiting RIF1 accumulation at DSBs thereby promoting BRCA1-mediated HR. Required for stable recruitment of ELOA and CUL5 to DNA damage sites. Also involved in UV-induced translocation of ERCC8 to the nuclear matrix. Essential for neuronal differentiation and neuritogenesis; regulates transcription and chromatin remodeling activities required during neurogenesis. The sequence is that of DNA excision repair protein ERCC-6 from Homo sapiens (Human).